We begin with the raw amino-acid sequence, 122 residues long: UPF0102 protein CPE1705 (122 aa).

It belongs to the UPF0102 family.

The sequence is that of UPF0102 protein CPE1705 from Clostridium perfringens (strain 13 / Type A).